Reading from the N-terminus, the 492-residue chain is 3-octaprenyl-4-hydroxybenzoate carboxy-lyase (492 aa).

Asn177 is a binding site for Mn(2+). Prenylated FMN is bound by residues 180–182, 194–196, and 199–200; these read IYR, RWL, and RG. Glu243 is a binding site for Mn(2+). Asp292 serves as the catalytic Proton donor.

The protein belongs to the UbiD family. In terms of assembly, homohexamer. The cofactor is prenylated FMN. Mn(2+) is required as a cofactor.

It localises to the cell membrane. It carries out the reaction a 4-hydroxy-3-(all-trans-polyprenyl)benzoate + H(+) = a 2-(all-trans-polyprenyl)phenol + CO2. Its pathway is cofactor biosynthesis; ubiquinone biosynthesis. Functionally, catalyzes the decarboxylation of 3-octaprenyl-4-hydroxy benzoate to 2-octaprenylphenol, an intermediate step in ubiquinone biosynthesis. This is 3-octaprenyl-4-hydroxybenzoate carboxy-lyase from Neisseria meningitidis serogroup C / serotype 2a (strain ATCC 700532 / DSM 15464 / FAM18).